Reading from the N-terminus, the 636-residue chain is Plasma kallikrein (636 aa).

Positions 1–19 (MIALRQAAYFICLFATVSC) are cleaved as a signal peptide. 4 consecutive Apple domains span residues 21–104 (CLTQ…LKRC), 111–194 (CHRS…LKAC), 201–284 (CRVD…LLTC), and 294–377 (CHSK…LRLC). 12 cysteine pairs are disulfide-bonded: Cys-21–Cys-104, Cys-47–Cys-77, Cys-51–Cys-57, Cys-111–Cys-194, Cys-137–Cys-166, Cys-141–Cys-147, Cys-201–Cys-284, Cys-227–Cys-256, Cys-231–Cys-237, Cys-294–Cys-377, Cys-320–Cys-349, and Cys-324–Cys-330. 2 N-linked (GlcNAc...) asparagine glycosylation sites follow: Asn-66 and Asn-127. Asn-361 and Asn-397 each carry an N-linked (GlcNAc...) asparagine glycan. The 236-residue stretch at 392–627 (IVGGTNASWG…YVDWILEKTQ (236 aa)) folds into the Peptidase S1 domain. An intrachain disulfide couples Cys-420 to Cys-436. The active-site Charge relay system is the His-435. N-linked (GlcNAc...) asparagine glycosylation is present at Asn-454. Asp-484 serves as the catalytic Charge relay system. Residue Asn-495 is glycosylated (N-linked (GlcNAc...) asparagine). Intrachain disulfides connect Cys-518–Cys-585, Cys-549–Cys-564, and Cys-575–Cys-603. Ser-579 serves as the catalytic Charge relay system.

It belongs to the peptidase S1 family. Plasma kallikrein subfamily. Forms a heterodimer with SERPINA5. The zymogen is activated by factor XIIa, which cleaves the molecule into a light chain, which contains the active site, and a heavy chain, which associates with HMW kininogen. These chains are linked by one or more disulfide bonds.

It localises to the secreted. The catalysed reaction is Cleaves selectively Arg-|-Xaa and Lys-|-Xaa bonds, including Lys-|-Arg and Arg-|-Ser bonds in (human) kininogen to release bradykinin.. Its activity is regulated as follows. Inhibited by SERPINA5. Functionally, the enzyme cleaves Lys-Arg and Arg-Ser bonds. It activates, in a reciprocal reaction, factor XII after its binding to a negatively charged surface. It also releases bradykinin from HMW kininogen and may also play a role in the renin-angiotensin system by converting prorenin into renin. This is Plasma kallikrein (KLKB1) from Bos taurus (Bovine).